A 511-amino-acid polypeptide reads, in one-letter code: Maturase K (511 aa).

This sequence belongs to the intron maturase 2 family. MatK subfamily.

The protein resides in the plastid. The protein localises to the chloroplast. Functionally, usually encoded in the trnK tRNA gene intron. Probably assists in splicing its own and other chloroplast group II introns. The chain is Maturase K from Oryza nivara (Indian wild rice).